A 133-amino-acid polypeptide reads, in one-letter code: Ribosome-binding factor A (133 aa).

The protein belongs to the RbfA family. In terms of assembly, monomer. Binds 30S ribosomal subunits, but not 50S ribosomal subunits or 70S ribosomes.

Its subcellular location is the cytoplasm. One of several proteins that assist in the late maturation steps of the functional core of the 30S ribosomal subunit. Associates with free 30S ribosomal subunits (but not with 30S subunits that are part of 70S ribosomes or polysomes). Required for efficient processing of 16S rRNA. May interact with the 5'-terminal helix region of 16S rRNA. This is Ribosome-binding factor A from Bordetella bronchiseptica (strain ATCC BAA-588 / NCTC 13252 / RB50) (Alcaligenes bronchisepticus).